Here is a 255-residue protein sequence, read N- to C-terminus: NAD kinase (255 aa).

Catalysis depends on Asp44, which acts as the Proton acceptor. Residues 44–45 (DG), His49, 114–115 (NE), Asp144, Ala152, 155–160 (SAYNLS), and Gln216 each bind NAD(+).

This sequence belongs to the NAD kinase family. It depends on a divalent metal cation as a cofactor.

It is found in the cytoplasm. It catalyses the reaction NAD(+) + ATP = ADP + NADP(+) + H(+). Involved in the regulation of the intracellular balance of NAD and NADP, and is a key enzyme in the biosynthesis of NADP. Catalyzes specifically the phosphorylation on 2'-hydroxyl of the adenosine moiety of NAD to yield NADP. This is NAD kinase from Rickettsia africae (strain ESF-5).